We begin with the raw amino-acid sequence, 606 residues long: Neutral/alkaline invertase 3, chloroplastic (606 aa).

A chloroplast-targeting transit peptide spans 1–58 (MGIAEVALHSMPGAFAAHSPASNLPLAADAARGRRRRSANSLHSSRALQGPVRFPGLR). The disordered stretch occupies residues 97–126 (RVPGQAVGGNGSVNGSAAKPPPQRRKASSV).

The protein belongs to the glycosyl hydrolase 100 family.

The protein resides in the plastid. The protein localises to the chloroplast. The enzyme catalyses Hydrolysis of terminal non-reducing beta-D-fructofuranoside residues in beta-D-fructofuranosides.. Functionally, mitochondrial invertase that cleaves sucrose into glucose and fructose. This is Neutral/alkaline invertase 3, chloroplastic from Oryza sativa subsp. japonica (Rice).